A 572-amino-acid polypeptide reads, in one-letter code: Sialate:O-sulfotransferase 1 (572 aa).

Topologically, residues 1 to 14 are cytoplasmic; it reads MAKPFFRLQKFLRR. The chain crosses the membrane as a helical; Signal-anchor for type II membrane protein span at residues 15 to 35; that stretch reads TQFLLLFLTAAYLMTGSLLLL. Residues 36–572 are Extracellular-facing; sequence QRARVALPQA…AGLPREYVPR (537 aa). N105 carries N-linked (GlcNAc...) asparagine glycosylation. 2 consecutive WSC domains span residues 139–231 and 242–337; these read RGNY…YSVG and TATY…DTRC. N-linked (GlcNAc...) asparagine glycosylation is present at N254.

This sequence belongs to the WSCD family.

It localises to the golgi apparatus membrane. It carries out the reaction a ganglioside GM1b + 3'-phosphoadenylyl sulfate = an 8-O-sulfo-ganglioside GM1b + adenosine 3',5'-bisphosphate + H(+). In terms of biological role, sialate:O-sulfotransferase which catalyzes 8-O-sulfation at the Sia-glycan level using 3'-phosphoadenosine 5'-phosphosulfate (PAPS) as a donor, forming 8-O-sulfated Sia (Sia8S)-glycans. Displays selectivity toward glycolipids such as GM1 gangliosides. The chain is Sialate:O-sulfotransferase 1 (Wscd1) from Mus musculus (Mouse).